A 182-amino-acid chain; its full sequence is NADH-quinone oxidoreductase subunit B (182 aa).

[4Fe-4S] cluster contacts are provided by Cys-46, Cys-47, Cys-112, and Cys-141.

This sequence belongs to the complex I 20 kDa subunit family. NDH-1 is composed of 14 different subunits. Subunits NuoB, C, D, E, F, and G constitute the peripheral sector of the complex. It depends on [4Fe-4S] cluster as a cofactor.

The protein localises to the cell inner membrane. It catalyses the reaction a quinone + NADH + 5 H(+)(in) = a quinol + NAD(+) + 4 H(+)(out). NDH-1 shuttles electrons from NADH, via FMN and iron-sulfur (Fe-S) centers, to quinones in the respiratory chain. The immediate electron acceptor for the enzyme in this species is believed to be a menaquinone. Couples the redox reaction to proton translocation (for every two electrons transferred, four hydrogen ions are translocated across the cytoplasmic membrane), and thus conserves the redox energy in a proton gradient. The chain is NADH-quinone oxidoreductase subunit B from Flavobacterium johnsoniae (strain ATCC 17061 / DSM 2064 / JCM 8514 / BCRC 14874 / CCUG 350202 / NBRC 14942 / NCIMB 11054 / UW101) (Cytophaga johnsonae).